Consider the following 345-residue polypeptide: Glycerol-3-phosphate dehydrogenase [NAD(P)+] (345 aa).

Residues S23, Y24, H44, and K118 each contribute to the NADPH site. 3 residues coordinate sn-glycerol 3-phosphate: K118, G147, and T149. A151 provides a ligand contact to NADPH. Sn-glycerol 3-phosphate-binding residues include K203, D256, S266, R267, and N268. K203 (proton acceptor) is an active-site residue. R267 contacts NADPH. Residues V291 and E293 each coordinate NADPH.

It belongs to the NAD-dependent glycerol-3-phosphate dehydrogenase family.

The protein localises to the cytoplasm. The catalysed reaction is sn-glycerol 3-phosphate + NAD(+) = dihydroxyacetone phosphate + NADH + H(+). It carries out the reaction sn-glycerol 3-phosphate + NADP(+) = dihydroxyacetone phosphate + NADPH + H(+). The protein operates within membrane lipid metabolism; glycerophospholipid metabolism. Catalyzes the reduction of the glycolytic intermediate dihydroxyacetone phosphate (DHAP) to sn-glycerol 3-phosphate (G3P), the key precursor for phospholipid synthesis. The polypeptide is Glycerol-3-phosphate dehydrogenase [NAD(P)+] (Vibrio parahaemolyticus serotype O3:K6 (strain RIMD 2210633)).